The chain runs to 398 residues: Protein RecA (398 aa).

Residue 83–90 participates in ATP binding; that stretch reads GPESSGKT. The segment at 351–398 is disordered; that stretch reads AGQKNDKKSKLEEKANAGAGISEASEPDSSAEEDFEEFAPIDIGSLGE. Over residues 354–365 the composition is skewed to basic and acidic residues; sequence KNDKKSKLEEKA. The segment covering 375–389 has biased composition (acidic residues); that stretch reads SEPDSSAEEDFEEFA.

Belongs to the RecA family.

It is found in the cytoplasm. Can catalyze the hydrolysis of ATP in the presence of single-stranded DNA, the ATP-dependent uptake of single-stranded DNA by duplex DNA, and the ATP-dependent hybridization of homologous single-stranded DNAs. It interacts with LexA causing its activation and leading to its autocatalytic cleavage. The sequence is that of Protein RecA from Ruminococcus albus (strain ATCC 27210 / DSM 20455 / JCM 14654 / NCDO 2250 / 7).